The chain runs to 518 residues: 3-phosphoshikimate 1-carboxyvinyltransferase 1, chloroplastic (518 aa).

The N-terminal 74 residues, 1–74 (MAQISSMGQG…RISASVVTAQ (74 aa)), are a transit peptide targeting the chloroplast. 3-phosphoshikimate is bound by residues K97, S98, and R102. Residue K97 participates in phosphoenolpyruvate binding. Residues G175 and R205 each coordinate phosphoenolpyruvate. Residues S252, S253, Q254, S280, D405, and K432 each contribute to the 3-phosphoshikimate site. Q254 is a phosphoenolpyruvate binding site. Catalysis depends on D405, which acts as the Proton acceptor. Residues R436, R478, and K503 each contribute to the phosphoenolpyruvate site.

This sequence belongs to the EPSP synthase family.

It localises to the plastid. The protein resides in the chloroplast. It catalyses the reaction 3-phosphoshikimate + phosphoenolpyruvate = 5-O-(1-carboxyvinyl)-3-phosphoshikimate + phosphate. The protein operates within metabolic intermediate biosynthesis; chorismate biosynthesis; chorismate from D-erythrose 4-phosphate and phosphoenolpyruvate: step 6/7. Catalyzes the transfer of the enolpyruvyl moiety of phosphoenolpyruvate (PEP) to the 5-hydroxyl of shikimate-3-phosphate (S3P) to produce enolpyruvyl shikimate-3-phosphate and inorganic phosphate. The protein is 3-phosphoshikimate 1-carboxyvinyltransferase 1, chloroplastic (EPSPS-1) of Nicotiana tabacum (Common tobacco).